A 285-amino-acid polypeptide reads, in one-letter code: 2-dehydro-3-deoxyphosphooctonate aldolase (285 aa).

Belongs to the KdsA family.

The protein resides in the cytoplasm. It catalyses the reaction D-arabinose 5-phosphate + phosphoenolpyruvate + H2O = 3-deoxy-alpha-D-manno-2-octulosonate-8-phosphate + phosphate. The protein operates within carbohydrate biosynthesis; 3-deoxy-D-manno-octulosonate biosynthesis; 3-deoxy-D-manno-octulosonate from D-ribulose 5-phosphate: step 2/3. It functions in the pathway bacterial outer membrane biogenesis; lipopolysaccharide biosynthesis. This chain is 2-dehydro-3-deoxyphosphooctonate aldolase, found in Methylibium petroleiphilum (strain ATCC BAA-1232 / LMG 22953 / PM1).